We begin with the raw amino-acid sequence, 953 residues long: Catenin alpha-2 (953 aa).

Residue T632 is modified to Phosphothreonine. 3 positions are modified to phosphoserine: S640, S651, and S901. A compositionally biased stretch (basic and acidic residues) spans 912 to 927; that stretch reads EKKPLVKREKPEEFQT. A disordered region spans residues 912–939; the sequence is EKKPLVKREKPEEFQTRVRRGSQKKHIS. Residues 928–938 are compositionally biased toward basic residues; it reads RVRRGSQKKHI. S939 is modified (phosphoserine).

Belongs to the vinculin/alpha-catenin family. Interacts with CDH1 and CDH2. Interacts with ZNF639; recruits CTNNA2 to the nucleus. Interacts with F-actin. In terms of tissue distribution, expressed in neural tissues, with strongest expression in fetal and adult brain. Expressed in the developing cortical plate and marginal zone of 20-week-old human fetal brain.

Its subcellular location is the cell membrane. The protein localises to the cytoplasm. It localises to the cytoskeleton. The protein resides in the cell junction. It is found in the adherens junction. Its subcellular location is the cell projection. The protein localises to the axon. It localises to the nucleus. Functionally, may function as a linker between cadherin adhesion receptors and the cytoskeleton to regulate cell-cell adhesion and differentiation in the nervous system. Required for proper regulation of cortical neuronal migration and neurite growth. It acts as a negative regulator of Arp2/3 complex activity and Arp2/3-mediated actin polymerization. It thereby suppresses excessive actin branching which would impair neurite growth and stability. Regulates morphological plasticity of synapses and cerebellar and hippocampal lamination during development. Functions in the control of startle modulation. The polypeptide is Catenin alpha-2 (CTNNA2) (Homo sapiens (Human)).